Here is a 305-residue protein sequence, read N- to C-terminus: Coenzyme PQQ synthesis protein B (305 aa).

Belongs to the PqqB family.

Its pathway is cofactor biosynthesis; pyrroloquinoline quinone biosynthesis. Functionally, may be involved in the transport of PQQ or its precursor to the periplasm. The protein is Coenzyme PQQ synthesis protein B of Methylobacillus flagellatus (strain ATCC 51484 / DSM 6875 / VKM B-1610 / KT).